We begin with the raw amino-acid sequence, 350 residues long: Ornithine carbamoyltransferase, mitochondrial (350 aa).

The transit peptide at 1–30 (MLHHMRTIINASWRYGNKCIVRQFGFSQTY) directs the protein to the mitochondrion. Residues 86-90 (STRTR), arginine 137, and histidine 164 each bind carbamoyl phosphate. Residue arginine 137 participates in L-ornithine binding. Residues asparagine 195, 259 to 263 (DTWVS), 298 to 301 (HCLP), and arginine 326 contribute to the L-ornithine site. Cysteine 299 is an active-site residue. A carbamoyl phosphate-binding site is contributed by arginine 326.

Belongs to the aspartate/ornithine carbamoyltransferase superfamily. OTCase family. In terms of assembly, homotrimer. As to expression, liver.

It is found in the mitochondrion matrix. The enzyme catalyses carbamoyl phosphate + L-ornithine = L-citrulline + phosphate + H(+). Its pathway is nitrogen metabolism; urea cycle; L-citrulline from L-ornithine and carbamoyl phosphate: step 1/1. In terms of biological role, OTC is necessary for the tadpoles transition from an ammonotelic, aquatic larva to a ureotelic, terrestrial adult. This Aquarana catesbeiana (American bullfrog) protein is Ornithine carbamoyltransferase, mitochondrial.